The following is a 264-amino-acid chain: Hydroxyethylthiazole kinase (264 aa).

Met45 lines the substrate pocket. 2 residues coordinate ATP: Arg121 and Ser167. Position 194 (Gly194) interacts with substrate.

It belongs to the Thz kinase family. Mg(2+) serves as cofactor.

The catalysed reaction is 5-(2-hydroxyethyl)-4-methylthiazole + ATP = 4-methyl-5-(2-phosphooxyethyl)-thiazole + ADP + H(+). Its pathway is cofactor biosynthesis; thiamine diphosphate biosynthesis; 4-methyl-5-(2-phosphoethyl)-thiazole from 5-(2-hydroxyethyl)-4-methylthiazole: step 1/1. In terms of biological role, catalyzes the phosphorylation of the hydroxyl group of 4-methyl-5-beta-hydroxyethylthiazole (THZ). The sequence is that of Hydroxyethylthiazole kinase from Aliivibrio salmonicida (strain LFI1238) (Vibrio salmonicida (strain LFI1238)).